The chain runs to 1122 residues: Protein CAF130 (1122 aa).

A disordered region spans residues 1 to 24 (MTKKKAATNYAERQNLASEDSSGD). Polar residues predominate over residues 11-24 (AERQNLASEDSSGD). Serine 1042 is modified (phosphoserine).

In terms of assembly, subunit of the 1.0 MDa CCR4-NOT core complex that contains CCR4, CAF1, NOT1, NOT2, NOT3, NOT4, NOT5, CAF40 and CAF130. In the complex interacts with NOT1. The core complex probably is part of a less characterized 1.9 MDa CCR4-NOT complex.

Its subcellular location is the cytoplasm. The protein resides in the nucleus. Acts as a component of the CCR4-NOT core complex, which in the nucleus seems to be a general transcription factor, and in the cytoplasm the major mRNA deadenylase involved in mRNA turnover. The polypeptide is Protein CAF130 (CAF130) (Saccharomyces cerevisiae (strain ATCC 204508 / S288c) (Baker's yeast)).